Reading from the N-terminus, the 311-residue chain is Phosphopantothenate--cysteine ligase (311 aa).

Alanine 2 carries the N-acetylalanine modification.

The protein belongs to the PPC synthetase family. Homodimer.

It carries out the reaction (R)-4'-phosphopantothenate + L-cysteine + ATP = N-[(R)-4-phosphopantothenoyl]-L-cysteine + AMP + diphosphate + H(+). It catalyses the reaction (R)-4'-phosphopantothenate + L-cysteine + CTP = N-[(R)-4-phosphopantothenoyl]-L-cysteine + CMP + diphosphate + H(+). It participates in cofactor biosynthesis; coenzyme A biosynthesis; CoA from (R)-pantothenate: step 2/5. Catalyzes the second step in the biosynthesis of coenzyme A from vitamin B5, where cysteine is conjugated to 4'-phosphopantothenate to form 4-phosphopantothenoylcysteine. Has a preference for ATP over CTP as a cosubstrate. This Homo sapiens (Human) protein is Phosphopantothenate--cysteine ligase (PPCS).